Consider the following 234-residue polypeptide: Thymidylate kinase (234 aa).

20-27 serves as a coordination point for ATP; sequence GIDASGKT.

This sequence belongs to the thymidylate kinase family.

The catalysed reaction is dTMP + ATP = dTDP + ADP. Functionally, phosphorylation of dTMP to form dTDP in both de novo and salvage pathways of dTTP synthesis. The protein is Thymidylate kinase of Mycoplasmopsis pulmonis (strain UAB CTIP) (Mycoplasma pulmonis).